Here is a 321-residue protein sequence, read N- to C-terminus: Gap junction delta-2 protein (321 aa).

Over 1–19 (MGEWTILERLLEAAVQQHS) the chain is Cytoplasmic. Residues 20–42 (TMIGRILLTVVVIFRILIVAIVG) traverse the membrane as a helical segment. The Extracellular portion of the chain corresponds to 43–75 (ETVYDDEQTMFVCNTLQPGCNQACYDRAFPISH). The helical transmembrane segment at 76 to 98 (IRYWVFQIIMVCTPSLCFITYSV) threads the bilayer. Over 99-197 (HQSAKQRERR…KLRRQEGISR (99 aa)) the chain is Cytoplasmic. A disordered region spans residues 120-141 (PAESIGGPGGTGGGGSGGSKRE). The segment covering 125 to 137 (GGPGGTGGGGSGG) has biased composition (gly residues). A helical membrane pass occupies residues 198-220 (FYIIQVVFRNALEIGFLVGQYFL). Topologically, residues 221–252 (YGFSVPGLYECNRYPCIKEVECYVSRPTEKTV) are extracellular. The chain crosses the membrane as a helical span at residues 253–275 (FLVFMFAVSGICVVLNLAELNHL). At 276 to 321 (GWRKIKLAVRGAQAKRKSVYEIRNKDLPRVSVPNFGRTQSSDSAYV) the chain is on the cytoplasmic side.

The protein belongs to the connexin family. Delta-type subfamily. A connexon is composed of a hexamer of connexins. Highly expressed in neurons.

It is found in the cell membrane. Its subcellular location is the cell junction. The protein localises to the gap junction. Its function is as follows. One gap junction consists of a cluster of closely packed pairs of transmembrane channels, the connexons, through which materials of low MW diffuse from one cell to a neighboring cell. In Rattus norvegicus (Rat), this protein is Gap junction delta-2 protein (Gjd2).